A 604-amino-acid chain; its full sequence is Acetylcholinesterase 4 (604 aa).

The signal sequence occupies residues 1–23; that stretch reads MKPKLVFLPFLIFITVFIEESEA. Cys88 and Cys115 are disulfide-bonded. Residues Asn96 and Asn128 are each glycosylated (N-linked (GlcNAc...) asparagine). Ser219 serves as the catalytic Acyl-ester intermediate. A disulfide bridge links Cys273 with Cys284. N-linked (GlcNAc...) asparagine glycosylation is found at Asn274 and Asn299. The active-site Charge relay system is the Glu347. Residues Asn400 and Asn446 are each glycosylated (N-linked (GlcNAc...) asparagine). Cys426 and Cys561 are disulfide-bonded. His477 acts as the Charge relay system in catalysis.

It belongs to the type-B carboxylesterase/lipase family.

The protein resides in the synapse. Its subcellular location is the secreted. It localises to the cell membrane. It carries out the reaction acetylcholine + H2O = choline + acetate + H(+). Rapidly hydrolyzes choline released into the synapse. In Caenorhabditis briggsae, this protein is Acetylcholinesterase 4 (ace-4).